The sequence spans 94 residues: Large ribosomal subunit protein uL29 (94 aa).

The segment at 66–94 (NPGERKSRVLSRAKRKKKNLARLSAKVKG) is disordered. The span at 73–94 (RVLSRAKRKKKNLARLSAKVKG) shows a compositional bias: basic residues.

It belongs to the universal ribosomal protein uL29 family.

The polypeptide is Large ribosomal subunit protein uL29 (Leptospira borgpetersenii serovar Hardjo-bovis (strain JB197)).